The primary structure comprises 284 residues: Lipoyl synthase (284 aa).

[4Fe-4S] cluster-binding residues include Cys36, Cys41, Cys47, Cys62, Cys66, Cys69, and Ser273. A Radical SAM core domain is found at 48-262 (WGKGTATFMI…RTIGLKKGFR (215 aa)).

It belongs to the radical SAM superfamily. Lipoyl synthase family. It depends on [4Fe-4S] cluster as a cofactor.

The protein localises to the cytoplasm. The catalysed reaction is [[Fe-S] cluster scaffold protein carrying a second [4Fe-4S](2+) cluster] + N(6)-octanoyl-L-lysyl-[protein] + 2 oxidized [2Fe-2S]-[ferredoxin] + 2 S-adenosyl-L-methionine + 4 H(+) = [[Fe-S] cluster scaffold protein] + N(6)-[(R)-dihydrolipoyl]-L-lysyl-[protein] + 4 Fe(3+) + 2 hydrogen sulfide + 2 5'-deoxyadenosine + 2 L-methionine + 2 reduced [2Fe-2S]-[ferredoxin]. It functions in the pathway protein modification; protein lipoylation via endogenous pathway; protein N(6)-(lipoyl)lysine from octanoyl-[acyl-carrier-protein]: step 2/2. In terms of biological role, catalyzes the radical-mediated insertion of two sulfur atoms into the C-6 and C-8 positions of the octanoyl moiety bound to the lipoyl domains of lipoate-dependent enzymes, thereby converting the octanoylated domains into lipoylated derivatives. The chain is Lipoyl synthase from Phocaeicola vulgatus (strain ATCC 8482 / DSM 1447 / JCM 5826 / CCUG 4940 / NBRC 14291 / NCTC 11154) (Bacteroides vulgatus).